We begin with the raw amino-acid sequence, 420 residues long: UDP-N-acetylglucosamine 1-carboxyvinyltransferase (420 aa).

A phosphoenolpyruvate-binding site is contributed by Lys-23 to Asn-24. Arg-92 is a binding site for UDP-N-acetyl-alpha-D-glucosamine. Residue Cys-116 is the Proton donor of the active site. A 2-(S-cysteinyl)pyruvic acid O-phosphothioketal modification is found at Cys-116. UDP-N-acetyl-alpha-D-glucosamine-binding positions include Arg-121–Leu-125, Lys-161–Val-164, Asp-306, and Ile-328.

It belongs to the EPSP synthase family. MurA subfamily.

Its subcellular location is the cytoplasm. It catalyses the reaction phosphoenolpyruvate + UDP-N-acetyl-alpha-D-glucosamine = UDP-N-acetyl-3-O-(1-carboxyvinyl)-alpha-D-glucosamine + phosphate. Its pathway is cell wall biogenesis; peptidoglycan biosynthesis. Cell wall formation. Adds enolpyruvyl to UDP-N-acetylglucosamine. The protein is UDP-N-acetylglucosamine 1-carboxyvinyltransferase of Photobacterium profundum (strain SS9).